Consider the following 103-residue polypeptide: Phosphoribosyl-ATP pyrophosphatase (103 aa).

The protein belongs to the PRA-PH family.

The protein resides in the cytoplasm. The catalysed reaction is 1-(5-phospho-beta-D-ribosyl)-ATP + H2O = 1-(5-phospho-beta-D-ribosyl)-5'-AMP + diphosphate + H(+). The protein operates within amino-acid biosynthesis; L-histidine biosynthesis; L-histidine from 5-phospho-alpha-D-ribose 1-diphosphate: step 2/9. The sequence is that of Phosphoribosyl-ATP pyrophosphatase from Listeria monocytogenes serotype 4b (strain CLIP80459).